The following is a 175-amino-acid chain: Ribosome maturation factor RimM (175 aa).

The PRC barrel domain occupies 96 to 175 (EGDYYWHDLI…TITVDWDAGF (80 aa)).

The protein belongs to the RimM family. In terms of assembly, binds ribosomal protein uS19.

The protein resides in the cytoplasm. Functionally, an accessory protein needed during the final step in the assembly of 30S ribosomal subunit, possibly for assembly of the head region. Essential for efficient processing of 16S rRNA. May be needed both before and after RbfA during the maturation of 16S rRNA. It has affinity for free ribosomal 30S subunits but not for 70S ribosomes. The protein is Ribosome maturation factor RimM of Actinobacillus pleuropneumoniae serotype 5b (strain L20).